The chain runs to 513 residues: Ribonuclease Y (513 aa).

Residues 6-26 (YIIIAVVIIIICVILGLYVVD) traverse the membrane as a helical segment. In terms of domain architecture, KH spans 203–288 (TVHVVNLPND…EMVEKAKKEV (86 aa)). Positions 329-422 (VLKHSIEVSH…VQAADAISAA (94 aa)) constitute an HD domain.

Belongs to the RNase Y family.

The protein localises to the cell membrane. Its function is as follows. Endoribonuclease that initiates mRNA decay. This is Ribonuclease Y from Clostridium botulinum (strain Loch Maree / Type A3).